The primary structure comprises 724 residues: 1,3-beta-galactosyl-N-acetylhexosamine phosphorylase Cphy3030 (724 aa).

The active-site Proton donor is Asp-316.

This sequence belongs to the glycoside hydrolase 112 family.

The catalysed reaction is beta-D-galactosyl-(1-&gt;3)-N-acetyl-D-glucosamine + phosphate = alpha-D-galactose 1-phosphate + N-acetyl-D-glucosamine. Its function is as follows. Reversibly phosphorolyzes beta-D-galactopyranosyl-(1-&gt;3)-N-acetyl-D-glucosamine to form alpha-D-galactopyranose 1-phosphate and acetyl-D-glucosamine. Active towards galacto-N-biose and lacto-N-biose. Does not phosphorolyze galacto-N-tetraose or lacto-N-tetraose. In the reverse reaction has activity toward N-acetyl-D-glucosamine and N-acetyl-D-galactosamine, but not L-rhamnose, D-glucose or D-galactose. The sequence is that of 1,3-beta-galactosyl-N-acetylhexosamine phosphorylase Cphy3030 from Lachnoclostridium phytofermentans (strain ATCC 700394 / DSM 18823 / ISDg) (Clostridium phytofermentans).